Reading from the N-terminus, the 152-residue chain is Methylglyoxal synthase (152 aa).

The region spanning 1–152 is the MGS-like domain; sequence MELTTRTIAA…YDRYLQQRLK (152 aa). Substrate is bound by residues histidine 19, lysine 23, 45 to 48, and 65 to 66; these read TGTT and SG. Residue aspartate 71 is the Proton donor/acceptor of the active site. Histidine 98 is a substrate binding site.

The protein belongs to the methylglyoxal synthase family.

The catalysed reaction is dihydroxyacetone phosphate = methylglyoxal + phosphate. Its function is as follows. Catalyzes the formation of methylglyoxal from dihydroxyacetone phosphate. The chain is Methylglyoxal synthase from Yersinia enterocolitica serotype O:8 / biotype 1B (strain NCTC 13174 / 8081).